The primary structure comprises 728 residues: MGRRKKIVQECETLMDDPEHIRNIAIAAHVDHGKTTLTDNLLAGAGMISDDTAGEQLAMDTEEDEQERGITIDAANVSMTHEYEDQNHLINLIDTPGHVDFGGDVTRAMRAVDGALVVVDAVEGAMPQTETVLRQALREGVKPTLFINKVDRLISELQEGPEEMQKRLLAVIQDVNDLIRGMTEEMDDIEDWTVSVEEGTVGFGSALYKWGVSMPSMQRTGMDFGEIMELERADNRQELHERTPLSDVVLDMVCEHFPNPVDAQPMRVPRIWRGDAESQLADDMRLVNEDGEVVLMVTDIGVDPHAGEIAAGRVFSGTLEKGQELYVSGTAGKNRIQSVGIYMGGEREEVDRVPAGNIAAVTGLKDAIAGSTVSSEEMTPFESIEHISEPVITKSVEAQNMDDLPKLIETLQQVAKEDPTIQVEINEDTGEHLISGQGELHLEVIGQRIERNQGIPINTGEPIVVYREAPQEDSREVEGRSPNNHNRFYISIEPLGEDIVETIKMGEASMDMPELERREALQEAGMDKDDSQNIEHIHGTNILLDETKGIQHLNETMELVIEGLEEALDDGPLASEPVQGSLIRLHDARLHEDAIHRGPAQVIPAVREAVHNSLIDASIKLLEPIQQVRIDVPNDHMGAASGEIQGRRGRVDDMYQEGDLMVVEGVAPVDEMIGFSSDIRSATEGRASWNTENAGFQVLADNLQPDKISEIRERKGMKQELNPAIDYF.

Positions 19-261 (EHIRNIAIAA…MVCEHFPNPV (243 aa)) constitute a tr-type G domain. Residues 28–35 (AHVDHGKT), 94–98 (DTPGH), and 148–151 (NKVD) each bind GTP. Histidine 596 carries the diphthamide modification.

It belongs to the TRAFAC class translation factor GTPase superfamily. Classic translation factor GTPase family. EF-G/EF-2 subfamily.

It is found in the cytoplasm. Functionally, catalyzes the GTP-dependent ribosomal translocation step during translation elongation. During this step, the ribosome changes from the pre-translocational (PRE) to the post-translocational (POST) state as the newly formed A-site-bound peptidyl-tRNA and P-site-bound deacylated tRNA move to the P and E sites, respectively. Catalyzes the coordinated movement of the two tRNA molecules, the mRNA and conformational changes in the ribosome. The polypeptide is Elongation factor 2 (Haloarcula marismortui (strain ATCC 43049 / DSM 3752 / JCM 8966 / VKM B-1809) (Halobacterium marismortui)).